The following is a 384-amino-acid chain: Queuine tRNA-ribosyltransferase (384 aa).

Asp-103 functions as the Proton acceptor in the catalytic mechanism. Residues 103–107, Asp-157, Gln-200, and Gly-227 each bind substrate; that span reads DSGGF. Residues 258-264 are RNA binding; the sequence is GVGTYRE. The Nucleophile role is filled by Asp-277. The RNA binding; important for wobble base 34 recognition stretch occupies residues 282–286; sequence TRLAR. Residues Cys-315, Cys-317, Cys-320, and His-346 each contribute to the Zn(2+) site.

This sequence belongs to the queuine tRNA-ribosyltransferase family. In terms of assembly, homodimer. Within each dimer, one monomer is responsible for RNA recognition and catalysis, while the other monomer binds to the replacement base PreQ1. The cofactor is Zn(2+).

It carries out the reaction 7-aminomethyl-7-carbaguanine + guanosine(34) in tRNA = 7-aminomethyl-7-carbaguanosine(34) in tRNA + guanine. Its pathway is tRNA modification; tRNA-queuosine biosynthesis. Functionally, catalyzes the base-exchange of a guanine (G) residue with the queuine precursor 7-aminomethyl-7-deazaguanine (PreQ1) at position 34 (anticodon wobble position) in tRNAs with GU(N) anticodons (tRNA-Asp, -Asn, -His and -Tyr). Catalysis occurs through a double-displacement mechanism. The nucleophile active site attacks the C1' of nucleotide 34 to detach the guanine base from the RNA, forming a covalent enzyme-RNA intermediate. The proton acceptor active site deprotonates the incoming PreQ1, allowing a nucleophilic attack on the C1' of the ribose to form the product. After dissociation, two additional enzymatic reactions on the tRNA convert PreQ1 to queuine (Q), resulting in the hypermodified nucleoside queuosine (7-(((4,5-cis-dihydroxy-2-cyclopenten-1-yl)amino)methyl)-7-deazaguanosine). The sequence is that of Queuine tRNA-ribosyltransferase from Synechococcus elongatus (strain ATCC 33912 / PCC 7942 / FACHB-805) (Anacystis nidulans R2).